The following is a 309-amino-acid chain: General transcription factor IIH subunit 3 (309 aa).

A C4-type zinc finger spans residues Cys-269–Cys-286.

The protein belongs to the TFB4 family. As to quaternary structure, part of a TFIID-containing RNA polymerase II pre-initiation complex that is composed of TBP and at least GTF2A1, GTF2A2, GTF2E1, GTF2E2, GTF2F1, GTF2H2, GTF2H3, GTF2H4, GTF2H5, GTF2B, TCEA1, ERCC2, ERCC3, TAF1, TAF2, TAF3, TAF4, TAF5, TAF6, TAF7, TAF8, TAF9, TAF10, TAF11, TAF12 and TAF13. Component of the 7-subunit TFIIH core complex composed of XPB/ERCC3, XPD/ERCC2, GTF2H1, GTF2H2, GTF2H3, GTF2H4 and GTF2H5, which is active in NER. The core complex associates with the 3-subunit CDK-activating kinase (CAK) module composed of CCNH/cyclin H, CDK7 and MNAT1 to form the 10-subunit holoenzyme (holo-TFIIH) active in transcription. Interacts with RARA; the interaction requires prior phosphorylation of RARA on 'Ser-369' which then enhances interaction of RARA with CDK7.

It is found in the nucleus. Its function is as follows. Component of the general transcription and DNA repair factor IIH (TFIIH) core complex, which is involved in general and transcription-coupled nucleotide excision repair (NER) of damaged DNA and, when complexed to CAK, in RNA transcription by RNA polymerase II. In NER, TFIIH acts by opening DNA around the lesion to allow the excision of the damaged oligonucleotide and its replacement by a new DNA fragment. In transcription, TFIIH has an essential role in transcription initiation. When the pre-initiation complex (PIC) has been established, TFIIH is required for promoter opening and promoter escape. Phosphorylation of the C-terminal tail (CTD) of the largest subunit of RNA polymerase II by the kinase module CAK controls the initiation of transcription. This is General transcription factor IIH subunit 3 (Gtf2h3) from Mus musculus (Mouse).